The primary structure comprises 591 residues: MSLLTNYEGLRHQIERLVRENEELKKLVRLIRENHELKSAIKTQAGGLGISGFTSGLGEATAGLSSRQNNGVFLPPSPAVANERVLEEVGIMALAPLAEMLTSLQPSATPGSLMSPLTGTLSTLLSGPAPTSQSSPLTSFLTSPIAGPLTGTLASSLGLPSTGTLTPSSLVAGPVAMSQSSPLIAPVMGTVAVSLSSPLLSSTATPPGVSQNLLANPMSNLVLPEAPRLRLAEPLRGGPTGPQSPACVVPTATTKVPLSTEPPQSTQDPEPLSMAFAGAPLQTSTPIGAMGTPAPKTAFSFNTSDTQAQPSAAQEQVVPASVPTSPTTSPTVTVLASAPALAPQVATSYTPSSTTHIAQGAPHPPSRMHNSPTQNLPVPHCPPHNAHSPPRTSSSPASVNDSRGPRTTEPSTKSMMEVERKLAHRKTSKFPENPRESKQLAWERLVGEIAFQLDRRILSSIFPERVRLYGFTVSNIPEKIIQASLNPSDHKLDEKLCQRLTQRYVSVMNRLQSLGYNGRVHPALTEQLVNAYGILRERPELAASEGGPYTVDFLQRVVVETVHPGMLADALLLLSCLSQLAHDDGKPMFIW.

A coiled-coil region spans residues 1–42 (MSLLTNYEGLRHQIERLVRENEELKKLVRLIRENHELKSAIK). The interval 1–78 (MSLLTNYEGL…NNGVFLPPSP (78 aa)) is necessary for targeting centrosomes. Positions 302-314 (NTSDTQAQPSAAQ) are enriched in polar residues. Disordered regions lie at residues 302 to 331 (NTSDTQAQPSAAQEQVVPASVPTSPTTSPT) and 346 to 435 (ATSY…ENPR). Residues 317-331 (VVPASVPTSPTTSPT) are compositionally biased toward low complexity. 2 stretches are compositionally biased toward polar residues: residues 346 to 357 (ATSYTPSSTTHI) and 390 to 401 (PRTSSSPASVND).

It belongs to the speriolin family. Found in a complex with CDC20, CDC27 and TUBG1. Interacts with CDC20. As to expression, detected only in testis.

The protein resides in the cytoplasm. Its subcellular location is the cytoskeleton. It localises to the microtubule organizing center. The protein localises to the centrosome. The protein is Speriolin (SPATC1) of Homo sapiens (Human).